Here is a 167-residue protein sequence, read N- to C-terminus: ATP synthase subunit b (167 aa).

Residues 7–25 traverse the membrane as a helical segment; that stretch reads SFLLAVSFVIFIYLIYRPA.

This sequence belongs to the ATPase B chain family. F-type ATPases have 2 components, F(1) - the catalytic core - and F(0) - the membrane proton channel. F(1) has five subunits: alpha(3), beta(3), gamma(1), delta(1), epsilon(1). F(0) has three main subunits: a(1), b(2) and c(10-14). The alpha and beta chains form an alternating ring which encloses part of the gamma chain. F(1) is attached to F(0) by a central stalk formed by the gamma and epsilon chains, while a peripheral stalk is formed by the delta and b chains.

It is found in the cell inner membrane. Its function is as follows. F(1)F(0) ATP synthase produces ATP from ADP in the presence of a proton or sodium gradient. F-type ATPases consist of two structural domains, F(1) containing the extramembraneous catalytic core and F(0) containing the membrane proton channel, linked together by a central stalk and a peripheral stalk. During catalysis, ATP synthesis in the catalytic domain of F(1) is coupled via a rotary mechanism of the central stalk subunits to proton translocation. In terms of biological role, component of the F(0) channel, it forms part of the peripheral stalk, linking F(1) to F(0). The protein is ATP synthase subunit b of Rickettsia typhi (strain ATCC VR-144 / Wilmington).